The chain runs to 521 residues: Chromaffin granule amine transporter (521 aa).

Residues 1–21 (MLQVVLGAPQRLLKEGRQSRK) lie on the Cytoplasmic side of the membrane. The helical transmembrane segment at 22-42 (LVLVVVFVALLLDNMLLTVVV) threads the bilayer. Topologically, residues 43 to 135 (PIVPTFLYAT…IEFLEEENVR (93 aa)) are lumenal, vesicle. N58, N87, and N104 each carry an N-linked (GlcNAc...) asparagine glycan. A helical membrane pass occupies residues 136 to 155 (IGILFASKALMQLLVNPFVG). Over 156–164 (PLTNRIGYH) the chain is Cytoplasmic. A helical transmembrane segment spans residues 165-185 (IPMFVGFMIMFLSTLMFAFSG). Residues 186–194 (TYALLFVAR) are Lumenal, vesicle-facing. Residues 195 to 215 (TLQGIGSSFSSVAGLGMLASV) form a helical membrane-spanning segment. Residues 216 to 224 (YTDNYERGR) lie on the Cytoplasmic side of the membrane. A helical membrane pass occupies residues 225 to 247 (AMGIALGGLALGLLVGAPFGSVM). The Lumenal, vesicle segment spans residues 248-253 (YEFVGK). The helical transmembrane segment at 254–276 (SSPFLILAFLALLDGALQLCILW) threads the bilayer. Residues 277 to 296 (PSKVSPESAMGTSLLTLLKD) lie on the Cytoplasmic side of the membrane. A helical transmembrane segment spans residues 297 to 316 (PYILVAAGSICLANMGVAIL). At 317 to 332 (EPTLPIWMMQTMCSPE) the chain is on the lumenal, vesicle side. The chain crosses the membrane as a helical span at residues 333–357 (WQLGLAFLPASVAYLIGTNLFGVLA). At 358-362 (NKMGR) the chain is on the cytoplasmic side. Residues 363 to 383 (WLCSLVGMVAVGISLLCVPLA) form a helical membrane-spanning segment. Residues 384–394 (HNIFGLIGPNA) lie on the Lumenal, vesicle side of the membrane. A helical transmembrane segment spans residues 395–415 (GLGFAIGMVDSSLMPIMGYLV). Topologically, residues 416-419 (DLRH) are cytoplasmic. Residues 420–440 (TSVYGSVYAIADVAFCVGFAI) traverse the membrane as a helical segment. At 441–445 (GPSTG) the chain is on the lumenal, vesicle side. A helical transmembrane segment spans residues 446-467 (GVIVQVIGFPWLMVIIGTINII). Residues 468-521 (YAPLCCFLQNPPAKEEKRAILSQECPTETQMYTFQKPTKAFPLGENSDDPSSGE) are Cytoplasmic-facing.

This sequence belongs to the major facilitator superfamily. Vesicular transporter family. Adrenal gland.

The protein resides in the cytoplasmic vesicle. The protein localises to the secretory vesicle membrane. Its subcellular location is the secretory vesicle. It localises to the synaptic vesicle membrane. The enzyme catalyses serotonin(in) + 2 H(+)(out) = serotonin(out) + 2 H(+)(in). It catalyses the reaction (R)-noradrenaline(in) + 2 H(+)(out) = (R)-noradrenaline(out) + 2 H(+)(in). The catalysed reaction is dopamine(in) + 2 H(+)(out) = dopamine(out) + 2 H(+)(in). Its activity is regulated as follows. Strongly inhibited by reserpine, ketanserin and methamphetamine. Also inhibited weakly by tetrabenazine. Electrogenic antiporter that exchanges one cationic monoamine with two intravesicular protons across the membrane of secretory and synaptic vesicles. Uses the electrochemical proton gradient established by the V-type proton-pump ATPase to accumulate high concentrations of monoamines inside the vesicles prior to their release via exocytosis. Transports catecholamines and indolamines with higher affinity for serotonin. Regulates the transvesicular monoaminergic gradient that determines the quantal size. Mediates presynaptic monoaminergic vesicle transport in the amygdala and prefrontal brain regions related with emotion processing in response to environmental stimuli. The polypeptide is Chromaffin granule amine transporter (Slc18a1) (Rattus norvegicus (Rat)).